Here is a 379-residue protein sequence, read N- to C-terminus: Guanine nucleotide-binding protein subunit alpha-12 (379 aa).

Cys-11 is lipidated: S-palmitoyl cysteine. One can recognise a G-alpha domain in the interval 54 to 379; sequence RLVKILLLGA…QENLKDIMLQ (326 aa). The segment at 57-70 is G1 motif; it reads KILLLGAGESGKST. GTP is bound by residues 65-70 and 200-203; these read ESGKST and LLAR. Ser-69 provides a ligand contact to Mg(2+). Positions 198–206 are G2 motif; the sequence is DILLARKAT. Mg(2+) is bound at residue Thr-206. A Phosphothreonine modification is found at Thr-206. The interval 221–230 is G3 motif; it reads FKMVDVGGQR. Residues 290-297 are G4 motif; the sequence is ILFLNKMD. GTP contacts are provided by residues 294 to 297 and Ala-351; that span reads NKMD. The tract at residues 349-354 is G5 motif; it reads TTAIDT.

The protein belongs to the G-alpha family. G(12) subfamily. As to quaternary structure, g proteins are composed of 3 units; alpha, beta and gamma. The alpha chain contains the guanine nucleotide binding site. Interacts with UBXD5. Interacts (in GTP-bound form) with PPP5C (via TPR repeats); activates PPP5C phosphatase activity and translocates PPP5C to the cell membrane. Interacts with RGS22. Interacts (via N-terminus) with NAPA; the interaction promotes CDH5 localization to plasma membrane. Interacts with CTNND1 (via N-terminus); the interaction regulates CDH1-mediated cell-cell adhesion. Interacts with PPP2R1A; the interaction promotes protein phosphatase 2A activation causing dephosphorylation of MAPT. Interacts (in GTP-bound form) with ARHGEF1. Interacts (in GTP-bound form) with ARHGEF11 (via RGS domain). Interacts (in GTP-bound form) with ARHGEF12 (via RGS domain).

It localises to the cell membrane. It is found in the lateral cell membrane. The protein localises to the cytoplasm. Functionally, guanine nucleotide-binding proteins (G proteins) are involved as modulators or transducers in various transmembrane signaling systems. Activates effector molecule RhoA by binding and activating RhoGEFs (ARHGEF12/LARG). GNA12-dependent Rho signaling subsequently regulates transcription factor AP-1 (activating protein-1). GNA12-dependent Rho signaling also regulates protein phosphatese 2A activation causing dephosphorylation of its target proteins. Promotes tumor cell invasion and metastasis by activating RhoA/ROCK signaling pathway and up-regulating pro-inflammatory cytokine production. Inhibits CDH1-mediated cell adhesion in process independent from Rho activation. Together with NAPA promotes CDH5 localization to plasma membrane. May play a role in the control of cell migration through the TOR signaling cascade. This chain is Guanine nucleotide-binding protein subunit alpha-12 (Gna12), found in Rattus norvegicus (Rat).